Reading from the N-terminus, the 380-residue chain is Cytochrome b (380 aa).

4 consecutive transmembrane segments (helical) span residues 34-54 (FGSL…LLAT), 78-99 (WLIR…YLHI), 114-134 (WNTG…GYVL), and 179-199 (FFAL…THLT). 2 residues coordinate heme b: His-84 and His-98. Residues His-183 and His-197 each coordinate heme b. His-202 contributes to the a ubiquinone binding site. 4 helical membrane-spanning segments follow: residues 227-247 (PKDL…ALFS), 289-309 (LGGV…PFLH), 321-341 (LSQL…WVGS), and 348-368 (FIII…ILFP).

Belongs to the cytochrome b family. In terms of assembly, the cytochrome bc1 complex contains 11 subunits: 3 respiratory subunits (MT-CYB, CYC1 and UQCRFS1), 2 core proteins (UQCRC1 and UQCRC2) and 6 low-molecular weight proteins (UQCRH/QCR6, UQCRB/QCR7, UQCRQ/QCR8, UQCR10/QCR9, UQCR11/QCR10 and a cleavage product of UQCRFS1). This cytochrome bc1 complex then forms a dimer. The cofactor is heme b.

It localises to the mitochondrion inner membrane. Its function is as follows. Component of the ubiquinol-cytochrome c reductase complex (complex III or cytochrome b-c1 complex) that is part of the mitochondrial respiratory chain. The b-c1 complex mediates electron transfer from ubiquinol to cytochrome c. Contributes to the generation of a proton gradient across the mitochondrial membrane that is then used for ATP synthesis. The sequence is that of Cytochrome b (MT-CYB) from Todus todus (Jamaican tody).